The following is a 361-amino-acid chain: Tetraacyldisaccharide 4'-kinase (361 aa).

68–75 is an ATP binding site; sequence TVGGTGKT.

Belongs to the LpxK family.

The catalysed reaction is a lipid A disaccharide + ATP = a lipid IVA + ADP + H(+). Its pathway is glycolipid biosynthesis; lipid IV(A) biosynthesis; lipid IV(A) from (3R)-3-hydroxytetradecanoyl-[acyl-carrier-protein] and UDP-N-acetyl-alpha-D-glucosamine: step 6/6. Its function is as follows. Transfers the gamma-phosphate of ATP to the 4'-position of a tetraacyldisaccharide 1-phosphate intermediate (termed DS-1-P) to form tetraacyldisaccharide 1,4'-bis-phosphate (lipid IVA). This is Tetraacyldisaccharide 4'-kinase from Pelobacter propionicus (strain DSM 2379 / NBRC 103807 / OttBd1).